We begin with the raw amino-acid sequence, 146 residues long: Basic phospholipase A2 beta-bungarotoxin A1 chain (146 aa).

Residues 1–19 (MNPAHLLVLPAVCVSFLGA) form the signal peptide. A propeptide spanning residues 20–27 (SIIPPQSL) is cleaved from the precursor. Disulfide bonds link C54–C145, C56–C72, C71–C126, C78–C119, C87–C112, and C105–C117. Residues Y55, G57, and G59 each contribute to the Ca(2+) site. Residue H75 is part of the active site. Residue D76 coordinates Ca(2+). D120 is an active-site residue.

This sequence belongs to the phospholipase A2 family. Group I subfamily. D49 sub-subfamily. In terms of assembly, heterodimer with beta-bungarotoxin B chain; disulfide-linked. The A chain has phospholipase A2 activity and the B chain shows homology with the basic protease inhibitors. It depends on Ca(2+) as a cofactor. Expressed by the venom gland.

It localises to the secreted. The enzyme catalyses a 1,2-diacyl-sn-glycero-3-phosphocholine + H2O = a 1-acyl-sn-glycero-3-phosphocholine + a fatty acid + H(+). Snake venom phospholipase A2 (PLA2) that inhibits neuromuscular transmission by blocking acetylcholine release from the nerve termini. PLA2 catalyzes the calcium-dependent hydrolysis of the 2-acyl groups in 3-sn-phosphoglycerides. This is Basic phospholipase A2 beta-bungarotoxin A1 chain from Bungarus flaviceps flaviceps (Red-headed krait).